Reading from the N-terminus, the 651-residue chain is DNA mismatch repair protein MutL (651 aa).

Residues 383-405 (TAAEEPTPAPTSPDLEIGDLDDQ) are disordered.

It belongs to the DNA mismatch repair MutL/HexB family.

This protein is involved in the repair of mismatches in DNA. It is required for dam-dependent methyl-directed DNA mismatch repair. May act as a 'molecular matchmaker', a protein that promotes the formation of a stable complex between two or more DNA-binding proteins in an ATP-dependent manner without itself being part of a final effector complex. This is DNA mismatch repair protein MutL from Lacticaseibacillus paracasei (strain ATCC 334 / BCRC 17002 / CCUG 31169 / CIP 107868 / KCTC 3260 / NRRL B-441) (Lactobacillus paracasei).